Reading from the N-terminus, the 253-residue chain is Sporulation initiation inhibitor protein Soj (253 aa).

Lys-11, Gly-12, Gly-13, Val-14, Gly-15, Lys-16, Thr-17, Thr-18, Pro-214, and Asn-216 together coordinate ATP. Thr-17 is a binding site for Mg(2+).

This sequence belongs to the ParA family. Dimerizes in the presence of ATP but not ADP; ATP-binding is required for double-stranded (ds)DNA-binding. Interacts with DnaA.

It is found in the cytoplasm. It carries out the reaction ATP + H2O = ADP + phosphate + H(+). Its function is as follows. Acts as a spatially regulated molecular switch, capable of either inhibiting or activating the ability of DnaA to initiate DNA replication. Monomeric ADP-Soj inhibits oligomerization of DnaA on single-stranded (ss)- or double-stranded (ds)DNA, thus inhibiting DNA replication initiation; does not disassemble premade DnaA-DNA filaments. Decreases the residence time of DnaA on the chromosome at its binding sites (oriC, replication forks and (probably) promoter-binding sites). Soj forms nucleoprotein filaments in an ATP- and DNA-dependent manner. Inhibits the initiation of sporulation, Spo0J antagonizes this inhibition. Soj ultimately inhibits the activation (phosphorylation) of Spo0A. The polypeptide is Sporulation initiation inhibitor protein Soj (Bacillus subtilis (strain 168)).